The following is a 1378-amino-acid chain: DNA-directed RNA polymerase subunit beta (1378 aa).

This sequence belongs to the RNA polymerase beta chain family. In terms of assembly, the RNAP catalytic core consists of 2 alpha, 1 beta, 1 beta' and 1 omega subunit. When a sigma factor is associated with the core the holoenzyme is formed, which can initiate transcription.

It carries out the reaction RNA(n) + a ribonucleoside 5'-triphosphate = RNA(n+1) + diphosphate. Its function is as follows. DNA-dependent RNA polymerase catalyzes the transcription of DNA into RNA using the four ribonucleoside triphosphates as substrates. This is DNA-directed RNA polymerase subunit beta from Sorangium cellulosum (strain So ce56) (Polyangium cellulosum (strain So ce56)).